Reading from the N-terminus, the 72-residue chain is NADH dehydrogenase [ubiquinone] 1 beta subcomplex subunit 3-A (72 aa).

The chain crosses the membrane as a helical span at residues 31–48 (ALPGIGIGVGAFCVYLVG).

The protein belongs to the complex I NDUFB3 subunit family. As to quaternary structure, complex I is composed of at least 49 different subunits.

Its subcellular location is the mitochondrion inner membrane. Functionally, accessory subunit of the mitochondrial membrane respiratory chain NADH dehydrogenase (Complex I), that is believed not to be involved in catalysis. Complex I functions in the transfer of electrons from NADH to the respiratory chain. The immediate electron acceptor for the enzyme is believed to be ubiquinone. The protein is NADH dehydrogenase [ubiquinone] 1 beta subcomplex subunit 3-A of Arabidopsis thaliana (Mouse-ear cress).